Consider the following 355-residue polypeptide: Neutral protease 2 homolog AFUB_100460 (355 aa).

The first 19 residues, 1–19, serve as a signal peptide directing secretion; it reads MKITALASAILAVAQGALA. Positions 20 to 172 are excised as a propeptide; sequence LPARAPALDI…PASIKPLDRR (153 aa). Cystine bridges form between C179–C251 and C258–C276. H300 is a binding site for Zn(2+). Residue E301 is part of the active site. The Zn(2+) site is built by H304 and D315.

Belongs to the peptidase M35 family. Zn(2+) is required as a cofactor.

It is found in the secreted. The enzyme catalyses Preferential cleavage of bonds with hydrophobic residues in P1'. Also 3-Asn-|-Gln-4 and 8-Gly-|-Ser-9 bonds in insulin B chain.. Secreted metalloproteinase that allows assimilation of proteinaceous substrates. Shows high activities on basic nuclear substrates such as histone and protamine. May be involved in virulence. In Aspergillus fumigatus (strain CBS 144.89 / FGSC A1163 / CEA10) (Neosartorya fumigata), this protein is Neutral protease 2 homolog AFUB_100460.